Here is a 304-residue protein sequence, read N- to C-terminus: Large ribosomal subunit protein uL18 (304 aa).

This sequence belongs to the universal ribosomal protein uL18 family. Component of a hexameric 5S RNP precursor complex, composed of 5S RNA, RRS1, RPF2, RPL5, RPL11 and SYO1; this complex acts as a precursor for ribosome assembly.

The protein resides in the cytoplasm. Component of the ribosome, a large ribonucleoprotein complex responsible for the synthesis of proteins in the cell. The small ribosomal subunit (SSU) binds messenger RNAs (mRNAs) and translates the encoded message by selecting cognate aminoacyl-transfer RNA (tRNA) molecules. The large subunit (LSU) contains the ribosomal catalytic site termed the peptidyl transferase center (PTC), which catalyzes the formation of peptide bonds, thereby polymerizing the amino acids delivered by tRNAs into a polypeptide chain. The nascent polypeptides leave the ribosome through a tunnel in the LSU and interact with protein factors that function in enzymatic processing, targeting, and the membrane insertion of nascent chains at the exit of the ribosomal tunnel. In Chaetomium thermophilum (strain DSM 1495 / CBS 144.50 / IMI 039719) (Thermochaetoides thermophila), this protein is Large ribosomal subunit protein uL18.